A 65-amino-acid polypeptide reads, in one-letter code: Photosystem II reaction center protein Z (65 aa).

2 consecutive transmembrane segments (helical) span residues 8-28 and 41-61; these read AVFALVLLSFVLIVAVPVALA and YAGAALWTSLIIVIGVLDSVV.

Belongs to the PsbZ family. As to quaternary structure, PSII is composed of 1 copy each of membrane proteins PsbA, PsbB, PsbC, PsbD, PsbE, PsbF, PsbH, PsbI, PsbJ, PsbK, PsbL, PsbM, PsbT, PsbX, PsbY, PsbZ, Psb30/Ycf12, at least 3 peripheral proteins of the oxygen-evolving complex and a large number of cofactors. It forms dimeric complexes.

It is found in the plastid. Its subcellular location is the cyanelle thylakoid membrane. May control the interaction of photosystem II (PSII) cores with the light-harvesting antenna, regulates electron flow through the 2 photosystem reaction centers. PSII is a light-driven water plastoquinone oxidoreductase, using light energy to abstract electrons from H(2)O, generating a proton gradient subsequently used for ATP formation. In Cyanophora paradoxa, this protein is Photosystem II reaction center protein Z.